Here is a 130-residue protein sequence, read N- to C-terminus: Protein ApaG (130 aa).

The 125-residue stretch at 3-127 folds into the ApaG domain; the sequence is RALTKDIEVV…FSLDSPGLLR (125 aa).

This is Protein ApaG from Rhizobium leguminosarum bv. trifolii (strain WSM2304).